Here is a 442-residue protein sequence, read N- to C-terminus: 5-methylthioadenosine/S-adenosylhomocysteine deaminase (442 aa).

Positions 70 and 72 each coordinate Zn(2+). 2 residues coordinate substrate: glutamate 99 and histidine 191. Histidine 218 contributes to the Zn(2+) binding site. The substrate site is built by glutamate 221 and aspartate 306. Aspartate 306 lines the Zn(2+) pocket.

This sequence belongs to the metallo-dependent hydrolases superfamily. MTA/SAH deaminase family. Requires Zn(2+) as cofactor.

It carries out the reaction S-adenosyl-L-homocysteine + H2O + H(+) = S-inosyl-L-homocysteine + NH4(+). It catalyses the reaction S-methyl-5'-thioadenosine + H2O + H(+) = S-methyl-5'-thioinosine + NH4(+). Its function is as follows. Catalyzes the deamination of 5-methylthioadenosine and S-adenosyl-L-homocysteine into 5-methylthioinosine and S-inosyl-L-homocysteine, respectively. Is also able to deaminate adenosine. The sequence is that of 5-methylthioadenosine/S-adenosylhomocysteine deaminase from Nitratidesulfovibrio vulgaris (strain ATCC 29579 / DSM 644 / CCUG 34227 / NCIMB 8303 / VKM B-1760 / Hildenborough) (Desulfovibrio vulgaris).